A 187-amino-acid polypeptide reads, in one-letter code: MTTTEKVQPRLKERYRNEIRDSLQQQFGSANVMQIPTVTKVVVNMGIGEAARDAKLINGAVNDLALITGQRPEIRRARKSIAQFKLREGMPIGARVTLRGDRMWEFLDRLTSIALPRIRDFRGLSSKQFDGVGNYTFGLAEQSVFHEIDVDKIDRVRGMDINVVTSATTDDEGRALLRALGFPFKEN.

This sequence belongs to the universal ribosomal protein uL5 family. As to quaternary structure, part of the 50S ribosomal subunit; part of the 5S rRNA/L5/L18/L25 subcomplex. Contacts the 5S rRNA and the P site tRNA. Forms a bridge to the 30S subunit in the 70S ribosome.

Functionally, this is one of the proteins that bind and probably mediate the attachment of the 5S RNA into the large ribosomal subunit, where it forms part of the central protuberance. In the 70S ribosome it contacts protein S13 of the 30S subunit (bridge B1b), connecting the 2 subunits; this bridge is implicated in subunit movement. Contacts the P site tRNA; the 5S rRNA and some of its associated proteins might help stabilize positioning of ribosome-bound tRNAs. In Mycolicibacterium paratuberculosis (strain ATCC BAA-968 / K-10) (Mycobacterium paratuberculosis), this protein is Large ribosomal subunit protein uL5.